A 225-amino-acid polypeptide reads, in one-letter code: Protein-L-isoaspartate O-methyltransferase (225 aa).

Residue Ser75 is part of the active site.

The protein belongs to the methyltransferase superfamily. L-isoaspartyl/D-aspartyl protein methyltransferase family.

It localises to the cytoplasm. The catalysed reaction is [protein]-L-isoaspartate + S-adenosyl-L-methionine = [protein]-L-isoaspartate alpha-methyl ester + S-adenosyl-L-homocysteine. In terms of biological role, catalyzes the methyl esterification of L-isoaspartyl residues in peptides and proteins that result from spontaneous decomposition of normal L-aspartyl and L-asparaginyl residues. It plays a role in the repair and/or degradation of damaged proteins. The protein is Protein-L-isoaspartate O-methyltransferase of Xanthomonas oryzae pv. oryzae (strain PXO99A).